We begin with the raw amino-acid sequence, 207 residues long: Large ribosomal subunit protein bL25 (207 aa).

Positions 1 to 20 (MANHQIKAQRRKDEGKGASR) are disordered.

It belongs to the bacterial ribosomal protein bL25 family. CTC subfamily. In terms of assembly, part of the 50S ribosomal subunit; part of the 5S rRNA/L5/L18/L25 subcomplex. Contacts the 5S rRNA. Binds to the 5S rRNA independently of L5 and L18.

This is one of the proteins that binds to the 5S RNA in the ribosome where it forms part of the central protuberance. The sequence is that of Large ribosomal subunit protein bL25 from Xylella fastidiosa (strain M12).